Consider the following 460-residue polypeptide: Ribosomal protein uS12 methylthiotransferase RimO (460 aa).

The region spanning 16 to 130 (NKIHFISLGC…ILSAIESKEY (115 aa)) is the MTTase N-terminal domain. [4Fe-4S] cluster is bound by residues Cys-25, Cys-61, Cys-93, Cys-164, Cys-168, and Cys-171. A Radical SAM core domain is found at 150–382 (STPKHYAYLK…SQAQKQNVEK (233 aa)). The region spanning 385 to 455 (QKLVGQVVEA…GYDLIGRVVK (71 aa)) is the TRAM domain.

It belongs to the methylthiotransferase family. RimO subfamily. [4Fe-4S] cluster serves as cofactor.

The protein resides in the cytoplasm. The enzyme catalyses L-aspartate(89)-[ribosomal protein uS12]-hydrogen + (sulfur carrier)-SH + AH2 + 2 S-adenosyl-L-methionine = 3-methylsulfanyl-L-aspartate(89)-[ribosomal protein uS12]-hydrogen + (sulfur carrier)-H + 5'-deoxyadenosine + L-methionine + A + S-adenosyl-L-homocysteine + 2 H(+). Functionally, catalyzes the methylthiolation of an aspartic acid residue of ribosomal protein uS12. This is Ribosomal protein uS12 methylthiotransferase RimO from Chlamydia felis (strain Fe/C-56) (Chlamydophila felis).